Reading from the N-terminus, the 407-residue chain is Accessory Sec system protein translocase subunit SecY2 (407 aa).

10 consecutive transmembrane segments (helical) span residues 13–33 (FLWTLFFLFIYVLGTKLTLPF), 65–85 (LFSVGLSPWMSSMLIWQMFAV), 104–124 (MLLTLVIALIQSVALVLNLPL), 133–153 (TTIMVLDTLVLMAGTYFLIWL), 158–178 (AAMGLGGSIMIVMASMIAYIP), 190–210 (ISSLWLALMLVFSLVFLYLAV), 248–268 (IMYAMTLVSIPQYFLLIIHFL), 287–307 (PAWFILYLLTIFILALAFAFI), 345–365 (FALVGAFYLILISGLPMMVVL), and 370–390 (YLRLSMIPGIFMIFIGMVFSI).

Belongs to the SecY/SEC61-alpha family. SecY2 subfamily. Component of the accessory SecA2/SecY2 protein translocase complex required to export cell wall proteins. May form heterotrimers with SecE and SecG subunits.

The protein resides in the cell membrane. Its function is as follows. Part of the accessory SecA2/SecY2 system specifically required for export of possible cell wall proteins. The central subunit of a protein translocation channel. This is Accessory Sec system protein translocase subunit SecY2 from Streptococcus sanguinis (strain SK36).